The following is a 181-amino-acid chain: Large ribosomal subunit protein uL6 (181 aa).

This sequence belongs to the universal ribosomal protein uL6 family. As to quaternary structure, part of the 50S ribosomal subunit.

This protein binds to the 23S rRNA, and is important in its secondary structure. It is located near the subunit interface in the base of the L7/L12 stalk, and near the tRNA binding site of the peptidyltransferase center. The sequence is that of Large ribosomal subunit protein uL6 from Saccharolobus solfataricus (strain ATCC 35092 / DSM 1617 / JCM 11322 / P2) (Sulfolobus solfataricus).